Reading from the N-terminus, the 334-residue chain is Heat-inducible transcription repressor HrcA (334 aa).

The protein belongs to the HrcA family.

Negative regulator of class I heat shock genes (grpE-dnaK-dnaJ and groELS operons). Prevents heat-shock induction of these operons. This chain is Heat-inducible transcription repressor HrcA, found in Paracidovorax citrulli (strain AAC00-1) (Acidovorax citrulli).